The primary structure comprises 1233 residues: Mitogen-activated protein kinase kinase kinase kinase 4 (1233 aa).

An N-acetylalanine modification is found at Ala2. Phosphoserine is present on Ser5. Residues 25–289 (FELVEVVGNG…EQLLKHPFIR (265 aa)) enclose the Protein kinase domain. ATP-binding positions include 31–39 (VGNGTYGQV) and Lys53. The active-site Proton acceptor is the Asp152. Disordered regions lie at residues 305 to 348 (IDRT…VPGE), 401 to 463 (QKEQ…VERE), and 489 to 805 (QAML…ETES). The span at 316-337 (DETEYEYSGSEEEEEEVPEQEG) shows a compositional bias: acidic residues. Residues Ser323 and Ser325 each carry the phosphoserine modification. A compositionally biased stretch (basic and acidic residues) spans 521–537 (PEPKPHYDPADRAREVQ). Ser543 is subject to Phosphoserine. The span at 544–559 (LKNNVSPVSRSHSFSD) shows a compositional bias: polar residues. 4 positions are modified to phosphoserine: Ser619, Ser621, Ser629, and Ser646. Residues 654–663 (LLWERVEKLV) show a composition bias toward basic and acidic residues. The segment covering 666 to 692 (PGSGSSSGSSNSGSQPGSHPGSQSGSG) has biased composition (low complexity). A phosphoserine mark is found at Ser691, Ser703, and Ser706. Basic and acidic residues-rich tracts occupy residues 713–726 (SAAKKPDDKKEVFR) and 741–756 (KELRAVEDVRPPHKVT). Acidic residues predominate over residues 766 to 781 (GTTDEEEEDVEQEGAD). Polar residues predominate over residues 783 to 803 (STSGPEDTRAASSPNLSNGET). Residues Ser785, Ser794, Ser795, Ser799, and Ser817 each carry the phosphoserine modification. Residue Thr822 is modified to Phosphothreonine. 4 positions are modified to phosphoserine: Ser846, Ser849, Ser894, and Ser907. The interval 852 to 1206 (PFIDPRLLQI…LKFLCGRNDK (355 aa)) is mediates interaction with RAP2A. In terms of domain architecture, CNH spans 920–1207 (NSEILCAALW…KFLCGRNDKV (288 aa)).

Belongs to the protein kinase superfamily. STE Ser/Thr protein kinase family. STE20 subfamily. In terms of assembly, interacts with the SH3 domain of the adapter proteins Nck. Interacts (via its CNH regulatory domain) with ATL1 (via the N-terminal region). Interacts with RAP2A (GTP-bound form preferentially). It depends on Mg(2+) as a cofactor. In terms of tissue distribution, appears to be ubiquitous, expressed in all tissue types examined. Highest levels observed in heart and brain.

Its subcellular location is the cytoplasm. The catalysed reaction is L-seryl-[protein] + ATP = O-phospho-L-seryl-[protein] + ADP + H(+). The enzyme catalyses L-threonyl-[protein] + ATP = O-phospho-L-threonyl-[protein] + ADP + H(+). Serine/threonine kinase that plays a role in the response to environmental stress and cytokines such as TNF-alpha. Appears to act upstream of the JUN N-terminal pathway. Activator of the Hippo signaling pathway which plays a pivotal role in organ size control and tumor suppression by restricting proliferation and promoting apoptosis. MAP4Ks act in parallel to and are partially redundant with STK3/MST2 and STK4/MST2 in the phosphorylation and activation of LATS1/2, and establish MAP4Ks as components of the expanded Hippo pathway. Phosphorylates SMAD1 on Thr-322. In Mus musculus (Mouse), this protein is Mitogen-activated protein kinase kinase kinase kinase 4 (Map4k4).